A 154-amino-acid chain; its full sequence is Nuclear cap-binding protein subunit 2 (154 aa).

Residues Tyr-10, Tyr-33, 102-106 (RCDWD), 113-117 (RQYGR), and 123-124 (QV) contribute to the mRNA site. The RRM domain occupies 30–108 (STLYMGNLSF…RIIRCDWDAG (79 aa)).

The protein belongs to the RRM NCBP2 family. As to quaternary structure, component of the nuclear cap-binding complex (CBC), a heterodimer composed of Cbp80 and Cbp20 that interacts with m7GpppG-capped RNA.

The protein localises to the nucleus. In terms of biological role, component of the cap-binding complex (CBC), which binds co-transcriptionally to the 5' cap of pre-mRNAs and is involved in various processes such as pre-mRNA splicing and RNA-mediated gene silencing (RNAi). The CBC complex is involved in miRNA-mediated RNA interference and is required for primary microRNAs (miRNAs) processing. Also involved in innate immunity via the short interfering RNAs (siRNAs) processing machinery by restricting the viral RNA production. In the CBC complex, Cbp20 recognizes and binds capped RNAs (m7GpppG-capped RNA) but requires Cbp80 to stabilize the movement of its N-terminal loop and lock the CBC into a high affinity cap-binding state with the cap structure. The polypeptide is Nuclear cap-binding protein subunit 2 (Bombyx mori (Silk moth)).